The sequence spans 131 residues: UPF0102 protein YraN (131 aa).

Residues 1 to 19 (MATVPTRSGSPRQLTTKQT) show a composition bias toward polar residues. Residues 1 to 20 (MATVPTRSGSPRQLTTKQTG) form a disordered region.

This sequence belongs to the UPF0102 family.

In Shigella boydii serotype 18 (strain CDC 3083-94 / BS512), this protein is UPF0102 protein YraN.